Reading from the N-terminus, the 293-residue chain is Ribonuclease H2 subunit B (293 aa).

Positions 251-278 (KRPQNSDITSSLLKKPNRKQATKKSKYF) are disordered. Basic residues predominate over residues 265-276 (KPNRKQATKKSK).

Belongs to the RNase H2 subunit B family. In terms of assembly, component of the RNase H2 complex.

It localises to the nucleus. The protein resides in the cytoplasm. Non catalytic subunit of RNase H2, an endonuclease that specifically degrades the RNA of RNA:DNA hybrids. Participates in DNA replication, possibly by mediating the removal of lagging-strand Okazaki fragment RNA primers during DNA replication. Mediates the excision of single ribonucleotides from DNA:RNA duplexes. The chain is Ribonuclease H2 subunit B (rnh202) from Schizosaccharomyces pombe (strain 972 / ATCC 24843) (Fission yeast).